A 264-amino-acid chain; its full sequence is tRNA (guanine-N(1)-)-methyltransferase (264 aa).

Residues Gly125 and 145-150 (LGDFVL) contribute to the S-adenosyl-L-methionine site.

The protein belongs to the RNA methyltransferase TrmD family. Homodimer.

Its subcellular location is the cytoplasm. It carries out the reaction guanosine(37) in tRNA + S-adenosyl-L-methionine = N(1)-methylguanosine(37) in tRNA + S-adenosyl-L-homocysteine + H(+). Specifically methylates guanosine-37 in various tRNAs. The polypeptide is tRNA (guanine-N(1)-)-methyltransferase (Burkholderia multivorans (strain ATCC 17616 / 249)).